A 178-amino-acid polypeptide reads, in one-letter code: Translation initiation factor IF-3 (178 aa).

Residues Met-1 to Glu-20 are disordered.

This sequence belongs to the IF-3 family. In terms of assembly, monomer.

It is found in the cytoplasm. In terms of biological role, IF-3 binds to the 30S ribosomal subunit and shifts the equilibrium between 70S ribosomes and their 50S and 30S subunits in favor of the free subunits, thus enhancing the availability of 30S subunits on which protein synthesis initiation begins. In Rhizobium leguminosarum bv. trifolii (strain WSM2304), this protein is Translation initiation factor IF-3.